The primary structure comprises 554 residues: Chaperonin GroEL (554 aa).

Residues 29-32, Lys-50, 86-90, Gly-418, and Asp-499 each bind ATP; these read TLGP and DGTTT. The disordered stretch occupies residues 528-554; it reads HEEDNNTNRSGGGVGGGHHGGMGGMDF. The segment covering 537–554 has biased composition (gly residues); the sequence is SGGGVGGGHHGGMGGMDF.

Belongs to the chaperonin (HSP60) family. In terms of assembly, forms a cylinder of 14 subunits composed of two heptameric rings stacked back-to-back. Interacts with the co-chaperonin GroES.

The protein localises to the cytoplasm. It catalyses the reaction ATP + H2O + a folded polypeptide = ADP + phosphate + an unfolded polypeptide.. In terms of biological role, together with its co-chaperonin GroES, plays an essential role in assisting protein folding. The GroEL-GroES system forms a nano-cage that allows encapsulation of the non-native substrate proteins and provides a physical environment optimized to promote and accelerate protein folding. This is Chaperonin GroEL from Orientia tsutsugamushi (strain Boryong) (Rickettsia tsutsugamushi).